The sequence spans 444 residues: Proline--tRNA ligase (444 aa).

It belongs to the class-II aminoacyl-tRNA synthetase family. ProS type 2 subfamily. Homodimer.

Its subcellular location is the cytoplasm. It carries out the reaction tRNA(Pro) + L-proline + ATP = L-prolyl-tRNA(Pro) + AMP + diphosphate. In terms of biological role, catalyzes the attachment of proline to tRNA(Pro) in a two-step reaction: proline is first activated by ATP to form Pro-AMP and then transferred to the acceptor end of tRNA(Pro). This is Proline--tRNA ligase from Methylobacterium sp. (strain 4-46).